The sequence spans 158 residues: Ribosome maturation factor RimP (158 aa).

Belongs to the RimP family.

It localises to the cytoplasm. Its function is as follows. Required for maturation of 30S ribosomal subunits. The chain is Ribosome maturation factor RimP from Lactiplantibacillus plantarum (strain ATCC BAA-793 / NCIMB 8826 / WCFS1) (Lactobacillus plantarum).